Reading from the N-terminus, the 104-residue chain is Membrane magnesium transporter (104 aa).

At 1–2 (MN) the chain is on the cytoplasmic side. The chain crosses the membrane as a helical span at residues 3–23 (LGFLVGVFGVLILSHAAYSTI). Residues 24 to 40 (QYRGLLKIMEEEFSRPP) lie on the Lumenal side of the membrane. Residues 41–61 (INVILELIIGLALCMWAALTF) form a helical membrane-spanning segment. Residues 62–104 (PGKFLSIHPDSDENRAVFLPDNSDFMIFNHRGRLFPPQIDMKF) are Cytoplasmic-facing.

It belongs to the membrane magnesium transporter (TC 1.A.67) family. In terms of assembly, component of the ER membrane protein complex (EMC).

Its subcellular location is the endoplasmic reticulum membrane. The protein localises to the golgi apparatus membrane. It is found in the early endosome membrane. Mediates Mg(2+) transport. The protein is Membrane magnesium transporter of Arabidopsis thaliana (Mouse-ear cress).